The following is a 427-amino-acid chain: Trigger factor (427 aa).

One can recognise a PPIase FKBP-type domain in the interval 163 to 248 (GDTVVIDFVG…IHEVKAKEVP (86 aa)).

The protein belongs to the FKBP-type PPIase family. Tig subfamily.

It localises to the cytoplasm. The catalysed reaction is [protein]-peptidylproline (omega=180) = [protein]-peptidylproline (omega=0). Its function is as follows. Involved in protein export. Acts as a chaperone by maintaining the newly synthesized protein in an open conformation. Functions as a peptidyl-prolyl cis-trans isomerase. This Streptococcus pneumoniae serotype 2 (strain D39 / NCTC 7466) protein is Trigger factor.